Reading from the N-terminus, the 273-residue chain is Dermonecrotic toxin LdSicTox-alphaIB3avi (273 aa).

The active site involves His-5. Mg(2+)-binding residues include Glu-25 and Asp-27. The active-site Nucleophile is His-41. Cystine bridges form between Cys-45–Cys-51 and Cys-47–Cys-190. Asp-85 is a binding site for Mg(2+).

The protein belongs to the arthropod phospholipase D family. Class II subfamily. Requires Mg(2+) as cofactor. As to expression, expressed by the venom gland.

Its subcellular location is the secreted. The catalysed reaction is an N-(acyl)-sphingosylphosphocholine = an N-(acyl)-sphingosyl-1,3-cyclic phosphate + choline. It carries out the reaction an N-(acyl)-sphingosylphosphoethanolamine = an N-(acyl)-sphingosyl-1,3-cyclic phosphate + ethanolamine. The enzyme catalyses a 1-acyl-sn-glycero-3-phosphocholine = a 1-acyl-sn-glycero-2,3-cyclic phosphate + choline. It catalyses the reaction a 1-acyl-sn-glycero-3-phosphoethanolamine = a 1-acyl-sn-glycero-2,3-cyclic phosphate + ethanolamine. Functionally, dermonecrotic toxins cleave the phosphodiester linkage between the phosphate and headgroup of certain phospholipids (sphingolipid and lysolipid substrates), forming an alcohol (often choline) and a cyclic phosphate. This toxin acts on sphingomyelin (SM). It may also act on ceramide phosphoethanolamine (CPE), lysophosphatidylcholine (LPC) and lysophosphatidylethanolamine (LPE), but not on lysophosphatidylserine (LPS), and lysophosphatidylglycerol (LPG). It acts by transphosphatidylation, releasing exclusively cyclic phosphate products as second products. Induces dermonecrosis, hemolysis, increased vascular permeability, edema, inflammatory response, and platelet aggregation. The sequence is that of Dermonecrotic toxin LdSicTox-alphaIB3avi from Loxosceles deserta (Desert recluse spider).